The primary structure comprises 319 residues: Ribonuclease Z (319 aa).

His-62, His-64, Asp-66, His-67, His-145, Asp-215, and His-273 together coordinate Zn(2+). Residue Asp-66 is the Proton acceptor of the active site.

This sequence belongs to the RNase Z family. In terms of assembly, homodimer. Zn(2+) serves as cofactor.

The catalysed reaction is Endonucleolytic cleavage of RNA, removing extra 3' nucleotides from tRNA precursor, generating 3' termini of tRNAs. A 3'-hydroxy group is left at the tRNA terminus and a 5'-phosphoryl group is left at the trailer molecule.. Its function is as follows. Zinc phosphodiesterase, which displays some tRNA 3'-processing endonuclease activity. Probably involved in tRNA maturation, by removing a 3'-trailer from precursor tRNA. The chain is Ribonuclease Z from Borrelia recurrentis (strain A1).